Here is a 554-residue protein sequence, read N- to C-terminus: Glucose-6-phosphate isomerase (554 aa).

Glu359 functions as the Proton donor in the catalytic mechanism. Catalysis depends on residues His390 and Lys518.

Belongs to the GPI family.

The protein resides in the cytoplasm. It carries out the reaction alpha-D-glucose 6-phosphate = beta-D-fructose 6-phosphate. The protein operates within carbohydrate biosynthesis; gluconeogenesis. Its pathway is carbohydrate degradation; glycolysis; D-glyceraldehyde 3-phosphate and glycerone phosphate from D-glucose: step 2/4. In terms of biological role, catalyzes the reversible isomerization of glucose-6-phosphate to fructose-6-phosphate. The protein is Glucose-6-phosphate isomerase of Pseudomonas syringae pv. tomato (strain ATCC BAA-871 / DC3000).